The primary structure comprises 193 residues: Ion-translocating oxidoreductase complex subunit A (193 aa).

6 helical membrane-spanning segments follow: residues Leu5–Leu25, Ile39–Val59, Leu67–Phe87, Val102–Leu122, Ile134–Met154, and Ser171–Val191.

The protein belongs to the NqrDE/RnfAE family. In terms of assembly, the complex is composed of six subunits: RnfA, RnfB, RnfC, RnfD, RnfE and RnfG.

The protein resides in the cell inner membrane. Its function is as follows. Part of a membrane-bound complex that couples electron transfer with translocation of ions across the membrane. This chain is Ion-translocating oxidoreductase complex subunit A, found in Aliivibrio fischeri (strain ATCC 700601 / ES114) (Vibrio fischeri).